A 417-amino-acid polypeptide reads, in one-letter code: Solute carrier family 25 member 46-A (417 aa).

Over residues 1–13 the composition is skewed to basic and acidic residues; sequence MQPRRPDRFDGLE. The disordered stretch occupies residues 1–90; that stretch reads MQPRRPDRFD…AFGEENSNSA (90 aa). Residues 31–41 are compositionally biased toward low complexity; that stretch reads SSFPARSFSSS. A Solcar 1 repeat occupies 95–186; it reads QLNRFAGFGI…GILSEFTHLP (92 aa). 6 consecutive transmembrane segments (helical) span residues 102–122, 162–182, 198–218, 257–277, 313–333, and 382–402; these read FGIGLASLFTENVLAHPCIVL, MGSTFIVQGISLGAEGILSEF, IGGHLLLKGLVYVIVTPFYSA, LLPLLVLTFPTVLHGILHYIV, FPELIANFAASLCADVLLYPL, and LGFYKGFGAVVVQYTLHAIVL. A Solcar 2 repeat occupies 310 to 415; it reads EDYFPELIAN…KIIYSSVVQT (106 aa).

The protein belongs to the mitochondrial carrier (TC 2.A.29) family.

It localises to the mitochondrion outer membrane. May play a role in mitochondrial dynamics by controlling mitochondrial membrane fission. This is Solute carrier family 25 member 46-A (slc25a46-a) from Xenopus laevis (African clawed frog).